The sequence spans 268 residues: MRMCRRVVTVLALSLPLAAWAEVPVVDDNAGSYPPAGYGTSGAYAGSGASAPASAQGQLFMQLQQMQDQLSRQQGIIEELQNDVSRMKQENLERYQDLDRRINSGAAPAATPDNSSGGGASNAAPDAAAGAAAQQPAGSSQPGDPAKEKLYYDAAFDLIKQKDFDKASQAFNAFLRKYPNSQYAGNAQYWLGEVNLAKGDLQGASQAFAQVSQKYPKHSKVPDSLYKLADVERRMGHTDKVKGILQQVVTQYPGTSAAQLAQRDLQKL.

An N-terminal signal peptide occupies residues Met1–Ala21. A coiled-coil region spans residues Gln58–Arg94. The segment at Ser104–Ala146 is disordered. Residues Ser121–Gly143 show a composition bias toward low complexity. TPR repeat units lie at residues Lys149–Ser181, Gly185–His218, and Pro222–Thr255.

Belongs to the CpoB family.

Its subcellular location is the periplasm. Its function is as follows. Mediates coordination of peptidoglycan synthesis and outer membrane constriction during cell division. The polypeptide is Cell division coordinator CpoB (Pseudomonas putida (strain ATCC 47054 / DSM 6125 / CFBP 8728 / NCIMB 11950 / KT2440)).